A 206-amino-acid chain; its full sequence is Small ribosomal subunit protein uS4 (206 aa).

One can recognise an S4 RNA-binding domain in the interval 96–161 (RRLDNVVYRM…QGRIQAALAL (66 aa)).

The protein belongs to the universal ribosomal protein uS4 family. In terms of assembly, part of the 30S ribosomal subunit. Contacts protein S5. The interaction surface between S4 and S5 is involved in control of translational fidelity.

In terms of biological role, one of the primary rRNA binding proteins, it binds directly to 16S rRNA where it nucleates assembly of the body of the 30S subunit. Functionally, with S5 and S12 plays an important role in translational accuracy. The sequence is that of Small ribosomal subunit protein uS4 from Legionella pneumophila (strain Corby).